A 693-amino-acid polypeptide reads, in one-letter code: Testis-specific Y-encoded-like protein 2 (693 aa).

2 disordered regions span residues 1 to 56 (MDRP…EAAQ) and 104 to 125 (GYGE…EASG). Residue lysine 11 forms a Glycyl lysine isopeptide (Lys-Gly) (interchain with G-Cter in SUMO2) linkage. Serine 18 and serine 20 each carry phosphoserine. Residues 23 to 44 (RDPPPPPPPPPLLRLPLPPPQQ) show a composition bias toward pro residues. Residues lysine 163 and lysine 165 each participate in a glycyl lysine isopeptide (Lys-Gly) (interchain with G-Cter in SUMO2) cross-link. A disordered region spans residues 175-207 (EDEDERESMRSSRRRRRRRRRKQRKVKRESRER). A compositionally biased stretch (basic residues) spans 185-202 (SSRRRRRRRRRKQRKVKR). Residue threonine 340 is modified to Phosphothreonine. 2 disordered regions span residues 474–605 (ENIC…DIEY) and 627–693 (ISDE…GKTG). The span at 487-496 (VPNNETTDNN) shows a compositional bias: polar residues. The span at 509-519 (ESADDNNENPE) shows a compositional bias: acidic residues. Residues 531 to 542 (NPNNNENTYGNN) are compositionally biased toward low complexity. 2 stretches are compositionally biased toward acidic residues: residues 559–602 (SDSD…DDRD) and 627–675 (ISDE…DLED). Serine 658, serine 668, and serine 671 each carry phosphoserine.

This sequence belongs to the nucleosome assembly protein (NAP) family. As to quaternary structure, interacts with histones. Interacts with CASK. Part of a complex containing CASK, TBR1 and TSPYL2. Phosphorylation at Ser-20 and/or Thr-340 impairs function on cell proliferation. As to expression, ubiquitously expressed, with highest levels in brain, testis and heart, and lowest levels in liver and pancreas.

It is found in the nucleus. Its subcellular location is the cytoplasm. In terms of biological role, part of the CASK/TBR1/TSPYL2 transcriptional complex which modulates gene expression in response to neuronal synaptic activity, probably by facilitating nucleosome assembly. May inhibit cell proliferation by inducing p53-dependent CDKN1A expression. This is Testis-specific Y-encoded-like protein 2 (TSPYL2) from Homo sapiens (Human).